Reading from the N-terminus, the 126-residue chain is Arginine decarboxylase proenzyme (126 aa).

Residue serine 74 is the Schiff-base intermediate with substrate; via pyruvic acid of the active site. Serine 74 carries the pyruvic acid (Ser); by autocatalysis modification. Histidine 79 serves as the catalytic Proton acceptor; for processing activity. Cysteine 94 serves as the catalytic Proton donor; for catalytic activity.

The protein belongs to the prokaryotic AdoMetDC family. Type 1 subfamily. As to quaternary structure, heterooctamer of four alpha and four beta chains arranged as a tetramer of alpha/beta heterodimers. Pyruvate serves as cofactor. Is synthesized initially as an inactive proenzyme. Formation of the active enzyme involves a self-maturation process in which the active site pyruvoyl group is generated from an internal serine residue via an autocatalytic post-translational modification. Two non-identical subunits are generated from the proenzyme in this reaction, and the pyruvate is formed at the N-terminus of the alpha chain, which is derived from the carboxyl end of the proenzyme. The post-translation cleavage follows an unusual pathway, termed non-hydrolytic serinolysis, in which the side chain hydroxyl group of the serine supplies its oxygen atom to form the C-terminus of the beta chain, while the remainder of the serine residue undergoes an oxidative deamination to produce ammonia and the pyruvoyl group blocking the N-terminus of the alpha chain.

The enzyme catalyses L-arginine + H(+) = agmatine + CO2. The protein operates within amine and polyamine biosynthesis; agmatine biosynthesis; agmatine from L-arginine: step 1/1. In terms of biological role, specifically catalyzes the decarboxylation of L-arginine to agmatine. Has no S-adenosylmethionine decarboxylase (AdoMetDC) activity. This is Arginine decarboxylase proenzyme from Pyrobaculum neutrophilum (strain DSM 2338 / JCM 9278 / NBRC 100436 / V24Sta) (Thermoproteus neutrophilus).